A 224-amino-acid polypeptide reads, in one-letter code: Flagellar L-ring protein (224 aa).

The first 15 residues, 1–15, serve as a signal peptide directing secretion; that stretch reads MARYLLLASTLLLAA. Residue cysteine 16 is the site of N-palmitoyl cysteine attachment. Residue cysteine 16 is the site of S-diacylglycerol cysteine attachment.

It belongs to the FlgH family. As to quaternary structure, the basal body constitutes a major portion of the flagellar organelle and consists of four rings (L,P,S, and M) mounted on a central rod.

Its subcellular location is the cell outer membrane. The protein localises to the bacterial flagellum basal body. Assembles around the rod to form the L-ring and probably protects the motor/basal body from shearing forces during rotation. The chain is Flagellar L-ring protein from Shewanella sp. (strain ANA-3).